The sequence spans 637 residues: PTS system mannitol-specific EIICBA component (637 aa).

The Cytoplasmic portion of the chain corresponds to 1–23 (MSSDIKIKVQSFGRFLSNMVMPN). The region spanning 12-341 (FGRFLSNMVM…ILLKTSKVKE (330 aa)) is the PTS EIIC type-2 domain. A helical transmembrane segment spans residues 24–45 (IGAFIAWGIITALFIPTGWLPN). At 46 to 49 (ETLA) the chain is on the periplasmic side. The helical transmembrane segment at 50 to 70 (KLVGPMITYLLPLLIGYTGGK) threads the bilayer. Topologically, residues 71–133 (LVGGERGGVV…SGFEMLVNNF (63 aa)) are cytoplasmic. Residues 134–155 (SAGIIGMILAILAFLGIGPIVE) traverse the membrane as a helical segment. Over 156 to 164 (ALSKMLAAG) the chain is Periplasmic. Residues 165-185 (VNFMVVHDMLPLASIFVEPAK) traverse the membrane as a helical segment. At 186–272 (ILFLNNAINH…VLMNPRLILA (87 aa)) the chain is on the cytoplasmic side. A helical membrane pass occupies residues 273–292 (VILGGMTGVFTLTILGGGLV). Over 293–312 (SPASPGSILAVLAMTPKGAY) the chain is Periplasmic. A helical membrane pass occupies residues 313–334 (FANIAGVCAAMAVSFVVSAILL). Residues 335-637 (KTSKVKEEDD…EVLELLAGRK (303 aa)) are Cytoplasmic-facing. Residues 378–473 (RKIIVACDAG…RLVAAQRHTA (96 aa)) form the PTS EIIB type-2 domain. Cys-384 serves as the catalytic Phosphocysteine intermediate; for EIIB activity. The residue at position 384 (Cys-384) is a Phosphocysteine; by EIIA. A PTS EIIA type-2 domain is found at 494-636 (FKLGAENIFL…DEVLELLAGR (143 aa)). The active-site Tele-phosphohistidine intermediate; for EIIA activity is His-554. His-554 is modified (phosphohistidine; by HPr).

Homodimer. An intramolecular phosphotransfer takes places between His-554 and Cys-384.

Its subcellular location is the cell inner membrane. It catalyses the reaction D-mannitol(out) + N(pros)-phospho-L-histidyl-[protein] = D-mannitol 1-phosphate(in) + L-histidyl-[protein]. The phosphoenolpyruvate-dependent sugar phosphotransferase system (sugar PTS), a major carbohydrate active transport system, catalyzes the phosphorylation of incoming sugar substrates concomitantly with their translocation across the cell membrane. This system is involved in D-mannitol transport. Also able to use D-mannonic acid. The protein is PTS system mannitol-specific EIICBA component of Escherichia coli (strain K12).